The sequence spans 307 residues: Leucine-rich repeat-containing protein 59 (307 aa).

Residues 1-247 (MARANGRSQN…LAQRQSRLRK (247 aa)) lie on the Cytoplasmic side of the membrane. 5 LRR repeats span residues 10–31 (NLRD…SEVP), 40–61 (KATA…FCNL), 63–84 (HIVR…FGRL), 86–107 (NLQH…FAQL), and 109–131 (SLKW…AGDC). Residues 156-222 (EIELQRKLQL…LNSNKKAEEE (67 aa)) are a coiled coil. Residues 170–238 (KKKLEAKQRV…RMATPKEKKL (69 aa)) are disordered. Composition is skewed to basic and acidic residues over residues 174-187 (EAKQ…EREM) and 194-238 (QQKE…EKKL). A helical membrane pass occupies residues 248–268 (IACILLFGLLVVLLVVVACRF). Topologically, residues 269–307 (TDLKAINMCTSVNAIYKETLSALHSNPVLERFLQDPSSQ) are lumenal.

In terms of assembly, interacts with SGO1.

Its subcellular location is the microsome membrane. It localises to the endoplasmic reticulum membrane. The protein resides in the nucleus envelope. Functionally, required for nuclear import of FGF1. This Xenopus laevis (African clawed frog) protein is Leucine-rich repeat-containing protein 59 (lrrc59).